Here is a 152-residue protein sequence, read N- to C-terminus: Putative polyketide cyclase (152 aa).

The protein to polyketide cyclases.

It functions in the pathway antibiotic biosynthesis; curamycin biosynthesis. This is Putative polyketide cyclase (curF) from Streptomyces cyaneus (Streptomyces curacoi).